We begin with the raw amino-acid sequence, 98 residues long: Defensin-like protein 68 (98 aa).

Residues 1 to 19 (MGSSKLLVALTLVVMITIS) form the signal peptide. Cystine bridges form between cysteine 38/cysteine 88, cysteine 42/cysteine 65, cysteine 51/cysteine 86, and cysteine 55/cysteine 87.

It belongs to the DEFL family.

Its subcellular location is the secreted. This Arabidopsis thaliana (Mouse-ear cress) protein is Defensin-like protein 68.